The sequence spans 138 residues: Thyrotropin subunit beta (138 aa).

Residues 1 to 20 (MTAIFLMSMVFGLACGQTMS) form the signal peptide. Cystine bridges form between Cys-22–Cys-72, Cys-36–Cys-87, Cys-39–Cys-125, Cys-47–Cys-103, Cys-51–Cys-105, and Cys-108–Cys-115. An N-linked (GlcNAc...) asparagine glycan is attached at Asn-43. A propeptide spanning residues 133 to 138 (VVEFSI) is cleaved from the precursor.

Belongs to the glycoprotein hormones subunit beta family. As to quaternary structure, heterodimer of a common alpha chain and a unique beta chain which confers biological specificity to thyrotropin, lutropin, follitropin and gonadotropin.

The protein localises to the secreted. In terms of biological role, indispensable for the control of thyroid structure and metabolism. The protein is Thyrotropin subunit beta (TSHB) of Equus caballus (Horse).